Reading from the N-terminus, the 172-residue chain is MAPFNMDIPTLAIPGDRNQSQAIELSQQAQQPQQPQQSQQAYTGHLQRKQADEGSAEYYFDKGCEWMGNHPWMTGMGVLGVAYFASGFVKSKQPGINGKAFVKGPFGQKMTPKEALQILNLKETNLSQAKLKEQHRKLMMANHPDKGGSSYLATKVNEAKDILEKRGGLKKK.

Positions 1–48 (MAPFNMDIPTLAIPGDRNQSQAIELSQQAQQPQQPQQSQQAYTGHLQR) are disordered. The Mitochondrial intermembrane segment spans residues 1-71 (MAPFNMDIPT…KGCEWMGNHP (71 aa)). Residues 26-41 (SQQAQQPQQPQQSQQA) show a composition bias toward low complexity. The helical transmembrane segment at 72 to 89 (WMTGMGVLGVAYFASGFV) threads the bilayer. The Mitochondrial matrix segment spans residues 90–172 (KSKQPGINGK…LEKRGGLKKK (83 aa)). The 59-residue stretch at 114–172 (EALQILNLKETNLSQAKLKEQHRKLMMANHPDKGGSSYLATKVNEAKDILEKRGGLKKK) folds into the J domain.

The protein belongs to the TIM14 family. In terms of assembly, heterodimer with PAM16. Component of the PAM complex, at least composed of mtHsp70, MGE1, TIM44, PAM16, PAM17 and PAM18.

The protein localises to the mitochondrion inner membrane. Functionally, essential component of the PAM complex, a complex required for the translocation of transit peptide-containing proteins from the inner membrane into the mitochondrial matrix in an ATP-dependent manner. In the complex, it is required to stimulate activity of mtHSP70 (SSC1). The sequence is that of Mitochondrial import inner membrane translocase subunit TIM14 (PAM18) from Debaryomyces hansenii (strain ATCC 36239 / CBS 767 / BCRC 21394 / JCM 1990 / NBRC 0083 / IGC 2968) (Yeast).